The following is a 312-amino-acid chain: MKTNYEFRPQYLKDFIGKEQLKNNLKVYLTASKRLENSFDHTLLHGLSGTGKTTLALIIANEMNVNCHITQGNLLNKPIDIINLLSLIKENDVVFIDEIHACGLGAFETLYSVLEDFCIDINIGKDFNSKMTRLKIPHFTLIGATTIFGKIPKSLEERFGHIFHLNEYEPSEISAIILKNNQMHFQIDLNEEEIDLIANNAKGIPRLANRLLKRVVDFKINGFNDIKNIFKKIQIYEFGLDEQDINYLNVLYRQDNEIGLKSIAQILRLDQYTIETKIEPYLIQHHFINKNLRGRKITIEGIDFLKNNQLIK.

A large ATPase domain (RuvB-L) region spans residues 1–168; it reads MKTNYEFRPQ…FGHIFHLNEY (168 aa). ATP is bound by residues R8, G49, K52, T53, T54, 115-117, R158, Y168, and R206; that span reads EDF. T53 is a binding site for Mg(2+). The small ATPAse domain (RuvB-S) stretch occupies residues 169–234; sequence EPSEISAIIL…DIKNIFKKIQ (66 aa). A head domain (RuvB-H) region spans residues 237–312; it reads EFGLDEQDIN…DFLKNNQLIK (76 aa). Positions 290 and 295 each coordinate DNA.

It belongs to the RuvB family. Homohexamer. Forms an RuvA(8)-RuvB(12)-Holliday junction (HJ) complex. HJ DNA is sandwiched between 2 RuvA tetramers; dsDNA enters through RuvA and exits via RuvB. An RuvB hexamer assembles on each DNA strand where it exits the tetramer. Each RuvB hexamer is contacted by two RuvA subunits (via domain III) on 2 adjacent RuvB subunits; this complex drives branch migration. In the full resolvosome a probable DNA-RuvA(4)-RuvB(12)-RuvC(2) complex forms which resolves the HJ.

The protein resides in the cytoplasm. The catalysed reaction is ATP + H2O = ADP + phosphate + H(+). Functionally, the RuvA-RuvB-RuvC complex processes Holliday junction (HJ) DNA during genetic recombination and DNA repair, while the RuvA-RuvB complex plays an important role in the rescue of blocked DNA replication forks via replication fork reversal (RFR). RuvA specifically binds to HJ cruciform DNA, conferring on it an open structure. The RuvB hexamer acts as an ATP-dependent pump, pulling dsDNA into and through the RuvAB complex. RuvB forms 2 homohexamers on either side of HJ DNA bound by 1 or 2 RuvA tetramers; 4 subunits per hexamer contact DNA at a time. Coordinated motions by a converter formed by DNA-disengaged RuvB subunits stimulates ATP hydrolysis and nucleotide exchange. Immobilization of the converter enables RuvB to convert the ATP-contained energy into a lever motion, pulling 2 nucleotides of DNA out of the RuvA tetramer per ATP hydrolyzed, thus driving DNA branch migration. The RuvB motors rotate together with the DNA substrate, which together with the progressing nucleotide cycle form the mechanistic basis for DNA recombination by continuous HJ branch migration. Branch migration allows RuvC to scan DNA until it finds its consensus sequence, where it cleaves and resolves cruciform DNA. The polypeptide is Holliday junction branch migration complex subunit RuvB (Ureaplasma parvum serovar 3 (strain ATCC 27815 / 27 / NCTC 11736)).